Consider the following 1458-residue polypeptide: ABC multidrug transporter B (1458 aa).

5 helical membrane passes run 30-50, 70-90, 102-122, 128-148, and 165-185; these read FSLL…VLII, LLWA…VLAV, ASIA…LLSC, STTP…FDIA, and IAIL…LEAV. N208 is a glycosylation site (N-linked (GlcNAc...) asparagine). Residues 273–295 traverse the membrane as a helical segment; that stretch reads WPLLSAVPPRACLAALNFCQPLL. Positions 283 to 561 constitute an ABC transmembrane type-1 1 domain; sequence ACLAALNFCQ…LVMALMTFVG (279 aa). An N-linked (GlcNAc...) asparagine glycan is attached at N309. 5 helical membrane-spanning segments follow: residues 314 to 334, 387 to 407, 411 to 431, 501 to 521, and 541 to 561; these read IGYG…VTMG, WQTI…IYLL, LGVA…GCLI, LGWT…YGIM, and LFAL…TFVG. Positions 626-853 constitute an ABC transporter 1 domain; it reads LTVKNATFAW…AGGYVSSFGL (228 aa). An N-linked (GlcNAc...) asparagine glycan is attached at N630. An ATP-binding site is contributed by 660–667; that stretch reads GPSGCGKS. 3 N-linked (GlcNAc...) asparagine glycosylation sites follow: N702, N804, and N879. An ABC transmembrane type-1 2 domain is found at 933-1182; sequence PNGRTGYYLG…LVTFWTNLET (250 aa). A run of 6 helical transmembrane segments spans residues 940-960, 978-998, 1016-1036, 1040-1060, 1125-1145, and 1156-1176; these read YLGI…IGCW, LLAT…SGSI, AAIN…LMGI, YAAI…KVYL, LTLT…VLVV, and VGVA…LVTF. Positions 1219-1449 constitute an ABC transporter 2 domain; the sequence is IEFKSVSAEY…EGSYFSRLYA (231 aa). An ATP-binding site is contributed by 1252 to 1259; sequence GRTGSGKT. A glycan (N-linked (GlcNAc...) asparagine) is linked at N1316.

The protein belongs to the ABC transporter superfamily. ABCC family. Conjugate transporter (TC 3.A.1.208) subfamily.

The protein localises to the cell membrane. In terms of biological role, pleiotropic ABC efflux transporter that may be involved in A.fumigatus adaptation to azoles such as vorizonazole. The chain is ABC multidrug transporter B from Aspergillus fumigatus (strain ATCC MYA-4609 / CBS 101355 / FGSC A1100 / Af293) (Neosartorya fumigata).